Reading from the N-terminus, the 445-residue chain is tRNA-2-methylthio-N(6)-dimethylallyladenosine synthase (445 aa).

The 115-residue stretch at 7-121 (KHFYIKSFGC…LPELIEKAAS (115 aa)) folds into the MTTase N-terminal domain. Cys16, Cys52, Cys84, Cys156, Cys160, and Cys163 together coordinate [4Fe-4S] cluster. Residues 142–374 (RQVGASAFLT…QALLNQQQFD (233 aa)) form the Radical SAM core domain. One can recognise a TRAM domain in the interval 377–438 (QQTIGRKATV…PNSVKGQFLD (62 aa)).

Belongs to the methylthiotransferase family. MiaB subfamily. In terms of assembly, monomer. It depends on [4Fe-4S] cluster as a cofactor.

It is found in the cytoplasm. It catalyses the reaction N(6)-dimethylallyladenosine(37) in tRNA + (sulfur carrier)-SH + AH2 + 2 S-adenosyl-L-methionine = 2-methylsulfanyl-N(6)-dimethylallyladenosine(37) in tRNA + (sulfur carrier)-H + 5'-deoxyadenosine + L-methionine + A + S-adenosyl-L-homocysteine + 2 H(+). In terms of biological role, catalyzes the methylthiolation of N6-(dimethylallyl)adenosine (i(6)A), leading to the formation of 2-methylthio-N6-(dimethylallyl)adenosine (ms(2)i(6)A) at position 37 in tRNAs that read codons beginning with uridine. This chain is tRNA-2-methylthio-N(6)-dimethylallyladenosine synthase, found in Zymomonas mobilis subsp. mobilis (strain ATCC 31821 / ZM4 / CP4).